The following is a 216-amino-acid chain: Probable transaldolase (216 aa).

Lys-83 (schiff-base intermediate with substrate) is an active-site residue.

The protein belongs to the transaldolase family. Type 3B subfamily.

It localises to the cytoplasm. The enzyme catalyses D-sedoheptulose 7-phosphate + D-glyceraldehyde 3-phosphate = D-erythrose 4-phosphate + beta-D-fructose 6-phosphate. It functions in the pathway carbohydrate degradation; pentose phosphate pathway; D-glyceraldehyde 3-phosphate and beta-D-fructose 6-phosphate from D-ribose 5-phosphate and D-xylulose 5-phosphate (non-oxidative stage): step 2/3. In terms of biological role, transaldolase is important for the balance of metabolites in the pentose-phosphate pathway. This is Probable transaldolase from Clostridioides difficile (strain 630) (Peptoclostridium difficile).